Reading from the N-terminus, the 259-residue chain is Adenylosuccinate synthetase (259 aa).

GTP contacts are provided by residues 3-9 (GDEGKGK) and 31-33 (GHT). Asp-4 acts as the Proton acceptor in catalysis. Residues Asp-4 and Gly-31 each coordinate Mg(2+). 4 to 7 (DEGK) serves as a coordination point for IMP. His-32 acts as the Proton donor in catalysis. IMP-binding residues include Thr-120, Arg-134, Gln-215, and Thr-230.

The protein belongs to the adenylosuccinate synthetase family. Homodimer. Mg(2+) is required as a cofactor.

The protein localises to the cytoplasm. It catalyses the reaction IMP + L-aspartate + GTP = N(6)-(1,2-dicarboxyethyl)-AMP + GDP + phosphate + 2 H(+). It functions in the pathway purine metabolism; AMP biosynthesis via de novo pathway; AMP from IMP: step 1/2. Functionally, plays an important role in the de novo pathway of purine nucleotide biosynthesis. Catalyzes the first committed step in the biosynthesis of AMP from IMP. This is Adenylosuccinate synthetase from Aggregatibacter actinomycetemcomitans (Actinobacillus actinomycetemcomitans).